Reading from the N-terminus, the 440-residue chain is GTPase Der (440 aa).

2 consecutive EngA-type G domains span residues 4-168 (PIVA…PENK) and 177-352 (IKVA…NQRA). GTP-binding positions include 10–17 (GRPNVGKS), 57–61 (DTGGI), 120–123 (NKVD), 183–190 (GKPNVGKS), 230–234 (DTAGL), and 295–298 (NKWD). Residues 353–437 (MRVPTGGLNE…PIRFIYREKS (85 aa)) enclose the KH-like domain.

Belongs to the TRAFAC class TrmE-Era-EngA-EngB-Septin-like GTPase superfamily. EngA (Der) GTPase family. As to quaternary structure, associates with the 50S ribosomal subunit.

Functionally, GTPase that plays an essential role in the late steps of ribosome biogenesis. The chain is GTPase Der from Alkaliphilus metalliredigens (strain QYMF).